The sequence spans 454 residues: DNA repair protein RadA (454 aa).

The C4-type zinc-finger motif lies at 11–28 (CTECGTHSPKWLGQCSGC). Residue 94–101 (GEPGIGKS) coordinates ATP. Residues 251–255 (KNRFG) carry the RadA KNRFG motif motif. A lon-protease-like region spans residues 350-454 (DVFLSIAGGL…TIKDAVRLLQ (105 aa)).

This sequence belongs to the RecA family. RadA subfamily.

DNA-dependent ATPase involved in processing of recombination intermediates, plays a role in repairing DNA breaks. Stimulates the branch migration of RecA-mediated strand transfer reactions, allowing the 3' invading strand to extend heteroduplex DNA faster. Binds ssDNA in the presence of ADP but not other nucleotides, has ATPase activity that is stimulated by ssDNA and various branched DNA structures, but inhibited by SSB. Does not have RecA's homology-searching function. The chain is DNA repair protein RadA from Chlamydia trachomatis serovar D (strain ATCC VR-885 / DSM 19411 / UW-3/Cx).